Reading from the N-terminus, the 92-residue chain is Probable Fe(2+)-trafficking protein (92 aa).

It belongs to the Fe(2+)-trafficking protein family.

In terms of biological role, could be a mediator in iron transactions between iron acquisition and iron-requiring processes, such as synthesis and/or repair of Fe-S clusters in biosynthetic enzymes. The sequence is that of Probable Fe(2+)-trafficking protein from Shewanella halifaxensis (strain HAW-EB4).